The sequence spans 308 residues: Glycosyltransferase 6 domain-containing protein 1 (308 aa).

The Cytoplasmic portion of the chain corresponds to 1–6 (MNSKRM). The helical; Signal-anchor for type II membrane protein transmembrane segment at 7-23 (LLLVLFAFSLMLVERYF) threads the bilayer. Topologically, residues 24–308 (RNHQVEELRL…KVAHDSHRKL (285 aa)) are lumenal. Asn-74 is a glycosylation site (N-linked (GlcNAc...) asparagine). Substrate-binding positions include 82–87 (FATGRF), 173–175 (AVN), and 195–198 (HAWW). Glu-263 acts as the Nucleophile in catalysis.

The protein belongs to the glycosyltransferase 6 family. It depends on Mn(2+) as a cofactor.

The protein resides in the membrane. This Macaca fascicularis (Crab-eating macaque) protein is Glycosyltransferase 6 domain-containing protein 1 (GLT6D1).